The sequence spans 485 residues: Glutamyl-tRNA(Gln) amidotransferase subunit A (485 aa).

Catalysis depends on charge relay system residues K78 and S153. Catalysis depends on S177, which acts as the Acyl-ester intermediate.

The protein belongs to the amidase family. GatA subfamily. As to quaternary structure, heterotrimer of A, B and C subunits.

It carries out the reaction L-glutamyl-tRNA(Gln) + L-glutamine + ATP + H2O = L-glutaminyl-tRNA(Gln) + L-glutamate + ADP + phosphate + H(+). Allows the formation of correctly charged Gln-tRNA(Gln) through the transamidation of misacylated Glu-tRNA(Gln) in organisms which lack glutaminyl-tRNA synthetase. The reaction takes place in the presence of glutamine and ATP through an activated gamma-phospho-Glu-tRNA(Gln). This is Glutamyl-tRNA(Gln) amidotransferase subunit A from Desulfatibacillum aliphaticivorans.